The chain runs to 218 residues: Uracil-DNA glycosylase (218 aa).

Asp59 (proton acceptor) is an active-site residue.

This sequence belongs to the uracil-DNA glycosylase (UDG) superfamily. UNG family.

Its subcellular location is the cytoplasm. It catalyses the reaction Hydrolyzes single-stranded DNA or mismatched double-stranded DNA and polynucleotides, releasing free uracil.. Its function is as follows. Excises uracil residues from the DNA which can arise as a result of misincorporation of dUMP residues by DNA polymerase or due to deamination of cytosine. This chain is Uracil-DNA glycosylase, found in Staphylococcus aureus (strain JH1).